Consider the following 177-residue polypeptide: GTP-dependent dephospho-CoA kinase (177 aa).

GTP contacts are provided by Asp48, Val49, Val50, Asp67, Lys69, and Glu124.

It belongs to the GTP-dependent DPCK family.

It carries out the reaction 3'-dephospho-CoA + GTP = GDP + CoA + H(+). It participates in cofactor biosynthesis; coenzyme A biosynthesis. In terms of biological role, catalyzes the GTP-dependent phosphorylation of the 3'-hydroxyl group of dephosphocoenzyme A to form coenzyme A (CoA). In Pyrococcus furiosus (strain ATCC 43587 / DSM 3638 / JCM 8422 / Vc1), this protein is GTP-dependent dephospho-CoA kinase.